The chain runs to 676 residues: MTAPRSRAPTTRARGDTEALCSPEDGWVKVHPSPGTMLFREILHGQLGYTEGQGVYNVVRSSEATTRQLQAAIFHALLNATTYRDLEADWLGHVAARGLQPQRLVRRYRNAREADIAGVAERVFDTWRNTLRTTLLDFAHGLVACFAPGGPSGPSSFPKYIDWLTCLGLVPILRKRQEGGVTQGLRAFLKQHPLTRQLATVAEAAERAGPGFFELALAFDSTRVADYDRVYIYYNHRRGDWLVRDPISGQRGECLVLWPPLWTGDRLVFDSPVQRLFPEIVACHSLREHAHVCRLRNTASVKVLLGRKSDSERGVAGAARVVNKVLGEDDETKAGSAASRLVRLIINMKGMRHVGDINDTVRSYLDEAGGHLIDAPAVDGTLPGFGKGGNSRGSAGQDQGGRAPQLRQAFRTAVVNNINGVLEGYINNLFGTIERLRETNAGLATQLQERDRELRRATAGALERQQRAADLAAESVTGGCGSRPAGADLLRADYDIIDVSKSMDDDTYVANSFQHPYIPSYAQDLERLSRLWEHELVRCFKILCHRNNQGQETSISYSSGAIAAFVAPYFESVLRAPRVGAPITGSDVILGEEELWDAVFKKTRLQTYLTDIAALFVADVQHAALPPPPSPVGADFRPGASPRGRSRSRSPGRTARGAPDQGGGIGHRDGRRDGRR.

Residues 383-404 (PGFGKGGNSRGSAGQDQGGRAP) are disordered. Positions 422-443 (LEGYINNLFGTIERLRETNAGL) are putative leucine zipper motif. Residues 627–676 (PPPSPVGADFRPGASPRGRSRSRSPGRTARGAPDQGGGIGHRDGRRDGRR) form a disordered region. The span at 666-676 (GHRDGRRDGRR) shows a compositional bias: basic and acidic residues.

Belongs to the herpesviridae portal protein family. Homododecamerizes. Interacts with terminase subunits TRM1 and TRM3.

The protein resides in the virion. Its subcellular location is the host nucleus. In terms of biological role, forms a portal in the viral capsid through which viral DNA is translocated during DNA packaging. Assembles as a dodecamer at a single fivefold axe of the T=16 icosahedric capsid. Binds to the molecular motor that translocates the viral DNA, termed terminase. This chain is Portal protein (UL6), found in Human herpesvirus 1 (strain 17) (HHV-1).